The sequence spans 422 residues: Oxysterol-binding protein 7 (422 aa).

The disordered stretch occupies residues 283 to 313 (EAAPASSASKKEKKKEKKKAKHSKHTCSPSD). The segment covering 293–307 (KEKKKEKKKAKHSKH) has biased composition (basic residues). Positions 354-384 (MQAADQIKKEIEDEQRKRLQITKEEEKKERA) form a coiled coil. A disordered region spans residues 402–422 (TLAPVSNSTSSTASDAASGSN). The span at 407 to 422 (SNSTSSTASDAASGSN) shows a compositional bias: low complexity.

The protein belongs to the OSBP family.

This Dictyostelium discoideum (Social amoeba) protein is Oxysterol-binding protein 7 (osbG).